The following is a 199-amino-acid chain: V-type ATP synthase subunit E (199 aa).

The protein belongs to the V-ATPase E subunit family.

In terms of biological role, produces ATP from ADP in the presence of a proton gradient across the membrane. In Borreliella burgdorferi (strain ATCC 35210 / DSM 4680 / CIP 102532 / B31) (Borrelia burgdorferi), this protein is V-type ATP synthase subunit E (atpE).